Here is a 189-residue protein sequence, read N- to C-terminus: Elongation factor P (189 aa).

The protein belongs to the elongation factor P family.

It localises to the cytoplasm. Its pathway is protein biosynthesis; polypeptide chain elongation. In terms of biological role, involved in peptide bond synthesis. Stimulates efficient translation and peptide-bond synthesis on native or reconstituted 70S ribosomes in vitro. Probably functions indirectly by altering the affinity of the ribosome for aminoacyl-tRNA, thus increasing their reactivity as acceptors for peptidyl transferase. This is Elongation factor P from Rhizobium etli (strain CIAT 652).